Consider the following 492-residue polypeptide: MLGSGLLLLAILAFLSVMVLVSVWQQKIRGKLPPGPIPLPFIGNYLQLNRKDVYSSITQLQEHYGPVFTIHLGPRRVVVLYGYDAVKEALVDHAEEFSGRGEQATFNTLFKGYGVAFSNGERAKQLRRFSIATLRDFGMGKRGVEERIQEEAGCLIKMLQGTCGAPIDPTIYLSKTASNVISSIVFGDRFNYEDKEFLSLLQMMGQVNKFAASPTGQLYDMFHSVMKYLPGPQQQIIKDSHKLEDFMIQKVKQNQSTLDPNSPRDFIDSFLIHMQKEKYVNSEFHMKNLVMTSLNLFFAGSETVSSTLRYGFLLLMKHPDVEAKVHEEIDRVIGRNRQPQYEDHMKMPYTQAVINEIQRFSNFAPLGIPRRITKDTSFRGFFLPKGTEVFPILGSLMTDPKFFSSPKDFNPQHFLDDKGQLKKIPAFLPFSTGKRFCLGDSLAKMELFLFFTTILQNFRFKFPRKLEDINESPTPEGFTRIIPKYTMSFVPI.

Cys-437 is a binding site for heme.

The protein belongs to the cytochrome P450 family. Heme serves as cofactor. Liver.

The protein resides in the endoplasmic reticulum membrane. The protein localises to the microsome membrane. It catalyses the reaction an organic molecule + reduced [NADPH--hemoprotein reductase] + O2 = an alcohol + oxidized [NADPH--hemoprotein reductase] + H2O + H(+). Its function is as follows. Highly active in the 7-alpha-hydroxylation of testosterone. This is Cytochrome P450 2A12 (Cyp2a12) from Mus musculus (Mouse).